The following is a 537-amino-acid chain: Putative cysteine ligase BshC (537 aa).

The protein belongs to the BshC family.

Functionally, involved in bacillithiol (BSH) biosynthesis. May catalyze the last step of the pathway, the addition of cysteine to glucosamine malate (GlcN-Mal) to generate BSH. The protein is Putative cysteine ligase BshC of Staphylococcus saprophyticus subsp. saprophyticus (strain ATCC 15305 / DSM 20229 / NCIMB 8711 / NCTC 7292 / S-41).